The chain runs to 437 residues: Elongation factor 1-gamma-B (437 aa).

The GST N-terminal domain maps to 2–87; it reads AGGTLYTYPD…YVANDELRGS (86 aa). Residues 89–222 form the GST C-terminal domain; it reads NRLHQAQVIQ…KMAQFDAKKF (134 aa). Basic and acidic residues predominate over residues 225–240; that stretch reads VQPKKETPKKEKPAKE. Residues 225–279 form a disordered region; that stretch reads VQPKKETPKKEKPAKEPKKKKKKKKKATPAPAPAPEDDLDESEKALAAEPKSKDP. Basic residues predominate over residues 241–251; the sequence is PKKKKKKKKKA. Residues 266–279 are compositionally biased toward basic and acidic residues; that stretch reads SEKALAAEPKSKDP. One can recognise an EF-1-gamma C-terminal domain in the interval 276–437; that stretch reads SKDPYAHLPK…KAFNQGKIFK (162 aa).

EF-1 is composed of four subunits: alpha, beta, delta, and gamma.

In terms of biological role, probably plays a role in anchoring the complex to other cellular components. In Xenopus laevis (African clawed frog), this protein is Elongation factor 1-gamma-B (eef1g-b).